A 157-amino-acid polypeptide reads, in one-letter code: SsrA-binding protein (157 aa).

The tract at residues 130–157 (HDKRQDMAKKDSQRRIQKELGQRQKGME) is disordered. Positions 132-157 (KRQDMAKKDSQRRIQKELGQRQKGME) are enriched in basic and acidic residues.

It belongs to the SmpB family.

It is found in the cytoplasm. Required for rescue of stalled ribosomes mediated by trans-translation. Binds to transfer-messenger RNA (tmRNA), required for stable association of tmRNA with ribosomes. tmRNA and SmpB together mimic tRNA shape, replacing the anticodon stem-loop with SmpB. tmRNA is encoded by the ssrA gene; the 2 termini fold to resemble tRNA(Ala) and it encodes a 'tag peptide', a short internal open reading frame. During trans-translation Ala-aminoacylated tmRNA acts like a tRNA, entering the A-site of stalled ribosomes, displacing the stalled mRNA. The ribosome then switches to translate the ORF on the tmRNA; the nascent peptide is terminated with the 'tag peptide' encoded by the tmRNA and targeted for degradation. The ribosome is freed to recommence translation, which seems to be the essential function of trans-translation. This chain is SsrA-binding protein, found in Alkaliphilus metalliredigens (strain QYMF).